The following is a 172-amino-acid chain: NADH-ubiquinone oxidoreductase chain 6 (172 aa).

A run of 5 helical transmembrane segments spans residues 1 to 21, 27 to 47, 48 to 68, 87 to 107, and 138 to 158; these read MTYF…AVAS, YGVV…LSLG, VSFV…VVFV, VVGY…VGGF, and CGVG…FVVL.

It belongs to the complex I subunit 6 family.

It is found in the mitochondrion membrane. It carries out the reaction a ubiquinone + NADH + 5 H(+)(in) = a ubiquinol + NAD(+) + 4 H(+)(out). Core subunit of the mitochondrial membrane respiratory chain NADH dehydrogenase (Complex I) that is believed to belong to the minimal assembly required for catalysis. Complex I functions in the transfer of electrons from NADH to the respiratory chain. The immediate electron acceptor for the enzyme is believed to be ubiquinone. This is NADH-ubiquinone oxidoreductase chain 6 (MT-ND6) from Uria lomvia (Thick-billed murre).